Reading from the N-terminus, the 426-residue chain is Histidine--tRNA ligase (426 aa).

The protein belongs to the class-II aminoacyl-tRNA synthetase family. Homodimer.

It localises to the cytoplasm. The enzyme catalyses tRNA(His) + L-histidine + ATP = L-histidyl-tRNA(His) + AMP + diphosphate + H(+). In Hydrogenovibrio crunogenus (strain DSM 25203 / XCL-2) (Thiomicrospira crunogena), this protein is Histidine--tRNA ligase.